The primary structure comprises 693 residues: Elongation factor G (693 aa).

A tr-type G domain is found at 8 to 283 (PQQRNIGIMA…AVVEYLPSPV (276 aa)). GTP-binding positions include 17 to 24 (AHIDAGKT), 81 to 85 (DTPGH), and 135 to 138 (NKMD).

This sequence belongs to the TRAFAC class translation factor GTPase superfamily. Classic translation factor GTPase family. EF-G/EF-2 subfamily.

It is found in the cytoplasm. Its function is as follows. Catalyzes the GTP-dependent ribosomal translocation step during translation elongation. During this step, the ribosome changes from the pre-translocational (PRE) to the post-translocational (POST) state as the newly formed A-site-bound peptidyl-tRNA and P-site-bound deacylated tRNA move to the P and E sites, respectively. Catalyzes the coordinated movement of the two tRNA molecules, the mRNA and conformational changes in the ribosome. This is Elongation factor G from Oleidesulfovibrio alaskensis (strain ATCC BAA-1058 / DSM 17464 / G20) (Desulfovibrio alaskensis).